The chain runs to 587 residues: Thioredoxin domain-containing protein 3 (587 aa).

The 118-residue stretch at 2–119 (ASKKREVQLQ…VIALIDEEKK (118 aa)) folds into the Thioredoxin domain. Cys-39 and Cys-42 are disulfide-bonded. NDK stretches follow at residues 157 to 255 (MAVI…PLEE), 313 to 453 (VQRT…STLA), and 454 to 587 (LIKP…NFEN).

In the C-terminal section; belongs to the NDK family. As to quaternary structure, monomer. As to expression, testis-specific.

It is found in the cytoplasm. Its function is as follows. Probably required during the final stages of sperm tail maturation in the testis and/or epididymis, where extensive disulfide bonding of fibrous sheath (FS) proteins occurs. In vitro, it has neither nucleoside diphosphate kinase (NDPK) activity nor reducing activity on disulfide bonds. Exhibits a 3'-5' exonuclease activity with a preference for single-stranded DNA, suggesting roles in DNA proofreading and repair. The chain is Thioredoxin domain-containing protein 3 (Nme8) from Rattus norvegicus (Rat).